We begin with the raw amino-acid sequence, 479 residues long: Ribosomal RNA small subunit methyltransferase F (479 aa).

Residues 125–131, glutamate 149, aspartate 176, and aspartate 194 contribute to the S-adenosyl-L-methionine site; that span reads AAAPGSK. The Nucleophile role is filled by cysteine 247.

Belongs to the class I-like SAM-binding methyltransferase superfamily. RsmB/NOP family.

It is found in the cytoplasm. The enzyme catalyses cytidine(1407) in 16S rRNA + S-adenosyl-L-methionine = 5-methylcytidine(1407) in 16S rRNA + S-adenosyl-L-homocysteine + H(+). Its function is as follows. Specifically methylates the cytosine at position 1407 (m5C1407) of 16S rRNA. The chain is Ribosomal RNA small subunit methyltransferase F from Shigella sonnei (strain Ss046).